Consider the following 316-residue polypeptide: Cytochrome c biogenesis protein CcsA (316 aa).

A run of 8 helical transmembrane segments spans residues 9–29, 39–61, 70–90, 94–114, 143–163, 224–244, 257–271, and 289–309; these read IFVN…LINL, FSKN…RYLQ, LYES…ILEV, IGLS…FATL, LISY…LSLF, TISL…VWAN, ETWA…AIYL, and SMGF…GVGL.

Belongs to the CcmF/CycK/Ccl1/NrfE/CcsA family. As to quaternary structure, may interact with Ccs1.

The protein localises to the plastid. The protein resides in the chloroplast thylakoid membrane. Required during biogenesis of c-type cytochromes (cytochrome c6 and cytochrome f) at the step of heme attachment. In Adiantum capillus-veneris (Maidenhair fern), this protein is Cytochrome c biogenesis protein CcsA.